Consider the following 178-residue polypeptide: NADH-ubiquinone oxidoreductase chain 6 (178 aa).

The next 5 membrane-spanning stretches (helical) occupy residues 1–21 (MMTYIVTILSTIFVVSFVGFS), 25–45 (SPIYGGVGLIVSGGVGCGIVL), 48–68 (GGSFLGLMVFLIYLGGMLVVF), 89–109 (VLLTFLLGLVGEVVLMIYLLL), and 152–172 (YGYWLVIVSGWSLVTCIIVVM).

It belongs to the complex I subunit 6 family.

The protein resides in the mitochondrion membrane. It carries out the reaction a ubiquinone + NADH + 5 H(+)(in) = a ubiquinol + NAD(+) + 4 H(+)(out). In terms of biological role, core subunit of the mitochondrial membrane respiratory chain NADH dehydrogenase (Complex I) that is believed to belong to the minimal assembly required for catalysis. Complex I functions in the transfer of electrons from NADH to the respiratory chain. The immediate electron acceptor for the enzyme is believed to be ubiquinone. In Pseudosoriculus fumidus (Taiwanese brown-toothed shrew), this protein is NADH-ubiquinone oxidoreductase chain 6 (MT-ND6).